We begin with the raw amino-acid sequence, 422 residues long: E3 ubiquitin-protein ligase CBLL2 (422 aa).

The RING-type zinc-finger motif lies at 54 to 94; the sequence is CDKCDLPIKIYGRIIPCKHAFCYNCANLYDKIGYKICPRCS. An HYB domain region spans residues 93-151; that stretch reads CSYPVLRIEEHKRGSVFMCSVVQGCKRTYLSQKSLQAHIKRRHKRARKQVASASLEKLR. The C2H2-type zinc-finger motif lies at 109 to 135; the sequence is FMCSVVQGCKRTYLSQKSLQAHIKRRH. 2 disordered regions span residues 190–213 and 378–422; these read MQQMPHEQHNQPHKDLQVPPPELS and QTDA…HRPY. Over residues 195 to 205 the composition is skewed to basic and acidic residues; sequence HEQHNQPHKDL. Over residues 393 to 405 the composition is skewed to pro residues; it reads LPPPPPTWSPPPS. Residues 410–422 are compositionally biased toward basic residues; sequence GSHHSYQRRHRPY.

Homodimer.

The protein localises to the cytoplasm. The catalysed reaction is S-ubiquitinyl-[E2 ubiquitin-conjugating enzyme]-L-cysteine + [acceptor protein]-L-lysine = [E2 ubiquitin-conjugating enzyme]-L-cysteine + N(6)-ubiquitinyl-[acceptor protein]-L-lysine.. It participates in protein modification; protein ubiquitination. Its function is as follows. E3 ubiquitin ligase catalyzing the covalent attachment of ubiquitin moieties onto substrate proteins. May operate on tyrosine-phosphorylated SRC substrates. This chain is E3 ubiquitin-protein ligase CBLL2 (CBLL2), found in Macaca fascicularis (Crab-eating macaque).